A 65-amino-acid chain; its full sequence is Small ribosomal subunit protein eS27 (65 aa).

4 residues coordinate Zn(2+): cysteine 20, cysteine 23, cysteine 39, and cysteine 42. Residues cysteine 20–cysteine 42 form a C4-type zinc finger.

Belongs to the eukaryotic ribosomal protein eS27 family. As to quaternary structure, part of the 30S ribosomal subunit. Zn(2+) serves as cofactor.

This is Small ribosomal subunit protein eS27 from Pyrococcus horikoshii (strain ATCC 700860 / DSM 12428 / JCM 9974 / NBRC 100139 / OT-3).